Consider the following 328-residue polypeptide: P2Y purinoceptor 6 (328 aa).

Over 1-27 the chain is Extracellular; it reads MEWDNGTGQALGLPPTTCVYRENFKQL. N-linked (GlcNAc...) asparagine glycosylation is present at Asn5. A helical transmembrane segment spans residues 28–48; the sequence is LLPPVYSAVLAAGLPLNICVI. The Cytoplasmic segment spans residues 49–62; it reads TQICTSRRALTRTA. A helical transmembrane segment spans residues 63–83; that stretch reads VYTLNLALADLLYACSLPLLI. The Extracellular portion of the chain corresponds to 84–101; sequence YNYAQGDHWPFGDFACRL. A disulfide bridge connects residues Cys99 and Cys177. Residues 102 to 122 form a helical membrane-spanning segment; it reads VRFLFYANLHGSILFLTCISF. The Cytoplasmic segment spans residues 123 to 144; the sequence is QRYLGICHPLAPWHKRGGRRAA. The helical transmembrane segment at 145-165 threads the bilayer; sequence WLVCVAVWLAVTTQCLPTAIF. Residues 166–194 are Extracellular-facing; sequence AATGIQRNRTVCYDLSPPALATHYMPYGM. A helical transmembrane segment spans residues 195-215; that stretch reads ALTVIGFLLPFAALLACYCLL. Residues 216–236 are Cytoplasmic-facing; it reads ACRLCRQDGPAEPVAQERRGK. The helical transmembrane segment at 237-257 threads the bilayer; it reads AARMAVVVAAAFAISFLPFHI. Over 258–280 the chain is Extracellular; it reads TKTAYLAVRSTPGVPCTVLEAFA. The chain crosses the membrane as a helical span at residues 281 to 303; sequence AAYKGTRPFASANSVLDPILFYF. The Cytoplasmic segment spans residues 304-328; it reads TQKKFRRRPHELLQKLTAKWQRQGR.

This sequence belongs to the G-protein coupled receptor 1 family.

The protein resides in the cell membrane. Functionally, receptor for extracellular UDP &gt; UTP &gt; ATP. The activity of this receptor is mediated by G proteins which activate a phosphatidylinositol-calcium second messenger system. This Homo sapiens (Human) protein is P2Y purinoceptor 6 (P2RY6).